The sequence spans 211 residues: 5-formyltetrahydrofolate cyclo-ligase (211 aa).

4–8 (KQLLR) contacts ATP. Residues Glu56 and 152–156 (HGAGY) contribute to the substrate site. ATP-binding positions include 151–158 (GHGAGYYD) and Asp194.

The protein belongs to the 5-formyltetrahydrofolate cyclo-ligase family. N-glycosylated.

Its subcellular location is the mitochondrion. It carries out the reaction (6S)-5-formyl-5,6,7,8-tetrahydrofolate + ATP = (6R)-5,10-methenyltetrahydrofolate + ADP + phosphate. Its function is as follows. Only enzyme known to utilize 5-formyltetrahydrofolate (folinic acid) as substrate. Contributes to tetrahydrofolate metabolism in an alternative way of folate biosynthesis. May regulate carbon flow through the folate-dependent one-carbon metabolic network that supplies carbon for the biosynthesis of purines, thymidine and amino acids. In Saccharomyces cerevisiae (strain ATCC 204508 / S288c) (Baker's yeast), this protein is 5-formyltetrahydrofolate cyclo-ligase (FAU1).